Consider the following 27-residue polypeptide: Chitinase 47 kDa (27 aa).

One can recognise a GH18 domain in the interval 3–27; the sequence is SKVVGYFTEWGTYDRKYYVKNIEXS.

The protein belongs to the glycosyl hydrolase 18 family. Chitinase class II subfamily. As to quaternary structure, homodimer.

It carries out the reaction Random endo-hydrolysis of N-acetyl-beta-D-glucosaminide (1-&gt;4)-beta-linkages in chitin and chitodextrins.. Its function is as follows. Able to cleave chitin oligomers from N=3 to 6. This chain is Chitinase 47 kDa, found in Streptomyces olivaceoviridis (Streptomyces corchorusii).